The following is a 754-amino-acid chain: 1,4-alpha-glucan branching enzyme GlgB (754 aa).

Residue aspartate 431 is the Nucleophile of the active site. Glutamate 484 serves as the catalytic Proton donor.

The protein belongs to the glycosyl hydrolase 13 family. GlgB subfamily. In terms of assembly, monomer.

It carries out the reaction Transfers a segment of a (1-&gt;4)-alpha-D-glucan chain to a primary hydroxy group in a similar glucan chain.. It participates in glycan biosynthesis; glycogen biosynthesis. Functionally, catalyzes the formation of the alpha-1,6-glucosidic linkages in glycogen by scission of a 1,4-alpha-linked oligosaccharide from growing alpha-1,4-glucan chains and the subsequent attachment of the oligosaccharide to the alpha-1,6 position. The sequence is that of 1,4-alpha-glucan branching enzyme GlgB from Prochlorococcus marinus (strain MIT 9515).